The primary structure comprises 149 residues: Ribosome-binding factor A (149 aa).

This sequence belongs to the RbfA family. Monomer. Binds 30S ribosomal subunits, but not 50S ribosomal subunits or 70S ribosomes.

The protein resides in the cytoplasm. Functionally, one of several proteins that assist in the late maturation steps of the functional core of the 30S ribosomal subunit. Associates with free 30S ribosomal subunits (but not with 30S subunits that are part of 70S ribosomes or polysomes). Required for efficient processing of 16S rRNA. May interact with the 5'-terminal helix region of 16S rRNA. The polypeptide is Ribosome-binding factor A (Caulobacter vibrioides (strain ATCC 19089 / CIP 103742 / CB 15) (Caulobacter crescentus)).